A 62-amino-acid chain; its full sequence is Photosystem II reaction center protein Z (62 aa).

Residue Met1 is modified to N-formylmethionine. Topologically, residues 1–4 (MTIL) are lumenal. The helical transmembrane segment at 5–25 (FQLALAALVILSFVMVIGVPV) threads the bilayer. Residues 26-36 (AYASPQDWDRS) are Cytoplasmic-facing. Residues 37–58 (KQLIFLGSGLWIALVLVVGVLN) traverse the membrane as a helical segment. Residues 59 to 62 (FFVV) lie on the Lumenal side of the membrane.

The protein belongs to the PsbZ family. PSII is composed of 1 copy each of membrane proteins PsbA, PsbB, PsbC, PsbD, PsbE, PsbF, PsbH, PsbI, PsbJ, PsbK, PsbL, PsbM, PsbT, PsbX, PsbY, PsbZ, Psb30/Ycf12, peripheral proteins PsbO, CyanoQ (PsbQ), PsbU, PsbV and a large number of cofactors. It forms dimeric complexes. Part of a photosystem II (PSII) assembly intermediate complex PSII-I; crystallized from a strain deleted of psbJ, it forms monomeric PSII before addition of the oxygen evolving complex. PSII-I includes 3 assembly factors not found in mature PSII (Psb27, Psb28 and Psb34). It depends on PSII binds multiple chlorophylls, carotenoids and specific lipids. as a cofactor.

The protein localises to the cellular thylakoid membrane. May control the interaction of photosystem II (PSII) cores with the light-harvesting antenna, regulates electron flow through the 2 photosystem reaction centers. PSII is a light-driven water plastoquinone oxidoreductase, using light energy to abstract electrons from H(2)O, generating a proton gradient subsequently used for ATP formation. Its function is as follows. May also aid in binding of PsbK, Psb30/Ycf12 and the oxygen-evolving complex to PSII, at least in vitro. The polypeptide is Photosystem II reaction center protein Z (Thermosynechococcus vestitus (strain NIES-2133 / IAM M-273 / BP-1)).